Reading from the N-terminus, the 286-residue chain is E3 ubiquitin-protein ligase SINA-like 7 (286 aa).

The RING-type zinc-finger motif lies at 51-87; it reads CPICYEAFTIPIFQCDNGHLACSSCCPKLNNKCPACT. Residues 101-285 form an SBD region; that stretch reads VLESILIPCP…MRISVKKLNK (185 aa). The segment at 104 to 162 adopts an SIAH-type zinc-finger fold; the sequence is SILIPCPNAKLGCKKNVSYGKELTHEKECMFSHCACPALDCNYTSSYKDLYTHYRITHM. Positions 109, 116, 128, 132, 139, 144, 156, and 161 each coordinate Zn(2+).

Belongs to the SINA (Seven in absentia) family.

The enzyme catalyses S-ubiquitinyl-[E2 ubiquitin-conjugating enzyme]-L-cysteine + [acceptor protein]-L-lysine = [E2 ubiquitin-conjugating enzyme]-L-cysteine + N(6)-ubiquitinyl-[acceptor protein]-L-lysine.. Its pathway is protein modification; protein ubiquitination. Functionally, E3 ubiquitin-protein ligase that mediates ubiquitination and subsequent proteasomal degradation of target proteins. E3 ubiquitin ligases accept ubiquitin from an E2 ubiquitin-conjugating enzyme in the form of a thioester and then directly transfers the ubiquitin to targeted substrates. It probably triggers the ubiquitin-mediated degradation of different substrates. This chain is E3 ubiquitin-protein ligase SINA-like 7, found in Arabidopsis thaliana (Mouse-ear cress).